The sequence spans 116 residues: Ig heavy chain V-A1 region BS-5 (116 aa).

At Gln-1 the chain carries Pyrrolidone carboxylic acid. The 107-residue stretch at 1–107 folds into the Ig-like domain; sequence QSVEESGGRL…LVHLAFVDVW (107 aa).

This is Ig heavy chain V-A1 region BS-5 from Oryctolagus cuniculus (Rabbit).